We begin with the raw amino-acid sequence, 400 residues long: Chalcone synthase 7 (400 aa).

Cys-168 is a catalytic residue.

It belongs to the thiolase-like superfamily. Chalcone/stilbene synthases family.

The catalysed reaction is (E)-4-coumaroyl-CoA + 3 malonyl-CoA + 3 H(+) = 2',4,4',6'-tetrahydroxychalcone + 3 CO2 + 4 CoA. It participates in secondary metabolite biosynthesis; flavonoid biosynthesis. Its function is as follows. The primary product of this enzyme is 4,2',4',6'-tetrahydroxychalcone (also termed naringenin-chalcone or chalcone) which can under specific conditions spontaneously isomerize into naringenin. In Sorghum bicolor (Sorghum), this protein is Chalcone synthase 7 (CHS7).